The sequence spans 306 residues: Pantothenate kinase (306 aa).

An ATP-binding site is contributed by 91–98 (GSVAVGKS).

Belongs to the prokaryotic pantothenate kinase family.

The protein resides in the cytoplasm. The catalysed reaction is (R)-pantothenate + ATP = (R)-4'-phosphopantothenate + ADP + H(+). It functions in the pathway cofactor biosynthesis; coenzyme A biosynthesis; CoA from (R)-pantothenate: step 1/5. The protein is Pantothenate kinase of Streptococcus thermophilus (strain CNRZ 1066).